The following is a 1089-amino-acid chain: GPI ethanolamine phosphate transferase 3, catalytic subunit (1089 aa).

The chain crosses the membrane as a helical span at residues Ala-4–Phe-24. A glycan (N-linked (GlcNAc...) asparagine) is linked at Asn-268. Helical transmembrane passes span Leu-457 to Phe-477, Leu-482 to Gly-502, Leu-510 to Trp-530, Thr-541 to Phe-561, Phe-575 to Leu-595, Leu-668 to Leu-688, Met-701 to Leu-721, Val-747 to Val-767, Ser-830 to Leu-850, Leu-857 to Ile-877, Phe-944 to Cys-964, Leu-1014 to Leu-1034, and Phe-1048 to Leu-1068.

This sequence belongs to the PIGG/PIGN/PIGO family. PIGO subfamily. Part of the ethanolamine phosphate transferase 3 complex composed by PIGO and PIGF. PIGF is required to stabilize PIGO.

It is found in the endoplasmic reticulum membrane. The protein operates within glycolipid biosynthesis; glycosylphosphatidylinositol-anchor biosynthesis. Functionally, catalytic subunit of the ethanolamine phosphate transferase 3 complex that transfers an ethanolamine phosphate (EtNP) from a phosphatidylethanolamine (PE) to the 6-OH position of the third alpha-1,2-linked mannose of an alpha-D-Man-(1-&gt;2)-alpha-D-Man-(1-&gt;6)-2-PEtn-alpha-D-Man-(1-&gt;4)-alpha-D-GlcN-(1-&gt;6)-(1-radyl,2-acyl-sn-glycero-3-phospho)-2-acyl-inositol (also termed H6) intermediate to generate a 6-PEtn-alpha-D-Man-(1-&gt;2)-alpha-D-Man-(1-&gt;6)-2-PEtn-alpha-D-Man-(1-&gt;4)-alpha-D-GlcN-(1-&gt;6)-(1-radyl,2-acyl-sn-glycero-3-phospho)-2-acyl-inositol (also termed H7) and participates in the tenth step of the glycosylphosphatidylinositol-anchor biosynthesis. The chain is GPI ethanolamine phosphate transferase 3, catalytic subunit from Homo sapiens (Human).